Here is a 207-residue protein sequence, read N- to C-terminus: Outer-membrane lipoprotein LolB (207 aa).

An N-terminal signal peptide occupies residues 1–21 (MPLPDFRFIRLLPLAALVLTA). Residue Cys-22 is the site of N-palmitoyl cysteine attachment. The S-diacylglycerol cysteine moiety is linked to residue Cys-22.

It belongs to the LolB family. As to quaternary structure, monomer.

The protein localises to the cell outer membrane. Its function is as follows. Plays a critical role in the incorporation of lipoproteins in the outer membrane after they are released by the LolA protein. This Escherichia coli O6:H1 (strain CFT073 / ATCC 700928 / UPEC) protein is Outer-membrane lipoprotein LolB.